The chain runs to 340 residues: Glycerol-3-phosphate dehydrogenase [NAD(P)+] (340 aa).

Residues serine 14, phenylalanine 15, arginine 35, and lysine 108 each coordinate NADPH. Residues lysine 108 and glycine 136 each coordinate sn-glycerol 3-phosphate. Residue alanine 140 coordinates NADPH. Sn-glycerol 3-phosphate is bound by residues lysine 191, aspartate 244, serine 254, arginine 255, and asparagine 256. The active-site Proton acceptor is lysine 191. Arginine 255 contributes to the NADPH binding site. NADPH-binding residues include valine 279 and glutamate 281.

It belongs to the NAD-dependent glycerol-3-phosphate dehydrogenase family.

Its subcellular location is the cytoplasm. The enzyme catalyses sn-glycerol 3-phosphate + NAD(+) = dihydroxyacetone phosphate + NADH + H(+). It catalyses the reaction sn-glycerol 3-phosphate + NADP(+) = dihydroxyacetone phosphate + NADPH + H(+). It participates in membrane lipid metabolism; glycerophospholipid metabolism. In terms of biological role, catalyzes the reduction of the glycolytic intermediate dihydroxyacetone phosphate (DHAP) to sn-glycerol 3-phosphate (G3P), the key precursor for phospholipid synthesis. This chain is Glycerol-3-phosphate dehydrogenase [NAD(P)+], found in Ectopseudomonas mendocina (strain ymp) (Pseudomonas mendocina).